The chain runs to 449 residues: Dynein regulatory complex protein 10 (449 aa).

A coiled-coil region spans residues 90 to 125 (AVREHEDLCQVLLENVRCLKEKERQLQEQKEAEEEG). In terms of domain architecture, IQ spans 400 to 429 (MVRAATLIQALWKGYLVRSLLRSKKKRGKG). Positions 422–449 (SKKKRGKGKAKDKEKGKQKGKEKGKGKK) are disordered. The span at 430–449 (KAKDKEKGKQKGKEKGKGKK) shows a compositional bias: basic and acidic residues.

The protein belongs to the DRC10 family. As to quaternary structure, component of the nexin-dynein regulatory complex (N-DRC). Interacts with CFAP52.

Its subcellular location is the cytoplasm. The protein resides in the cytoskeleton. It localises to the flagellum axoneme. In terms of biological role, component of the nexin-dynein regulatory complex (N-DRC), a key regulator of ciliary/flagellar motility which maintains the alignment and integrity of the distal axoneme and regulates microtubule sliding in motile axonemes. The protein is Dynein regulatory complex protein 10 (IQCD) of Homo sapiens (Human).